The following is a 140-amino-acid chain: Gonadotropin subunit beta-2 (140 aa).

The signal sequence occupies residues 1-23; sequence MGTPVKILVVLFSVIVLLAVAQS. 6 cysteine pairs are disulfide-bonded: Cys-29–Cys-77, Cys-43–Cys-92, Cys-46–Cys-130, Cys-54–Cys-108, Cys-58–Cys-110, and Cys-113–Cys-120. Residue Asn-33 is glycosylated (N-linked (GlcNAc...) asparagine).

It belongs to the glycoprotein hormones subunit beta family. Heterodimer of an alpha and a beta chain.

Its subcellular location is the secreted. Its function is as follows. Involved in gametogenesis and steroidogenesis. The sequence is that of Gonadotropin subunit beta-2 (cgbb) from Carassius auratus (Goldfish).